Here is a 446-residue protein sequence, read N- to C-terminus: MSCLMVERCGEVLFESPEQSVKCVCMLGDVRLRGQTGVPAERRGSYPFIDFRLLNNTTHSGEIGTKKKVKRLLSFQRYFHASRLLRGIIPQAPLHLLDEDYLGQARHMLSKVGTWDFDIFLFDRLTNGNSLVTLLCHLFNSHGLIHHFKLDMVTLHRFLVMVQEDYHGHNPYHNAVHAADVTQAMHCYLKEPKLASFLTPLDIMLGLLAAAAHDVDHPGVNQPFLIKTNHHLANLYQNMSVLENHHWRSTIGMLRESRLLAHLPKEMTQDIEQQLGSLILATDINRQNEFLTRLKAHLHNKDLRLENVQDRHFMLQIALKCADICNPCRIWEMSKQWSERVCEEFYRQGDLEQKFELEISPLCNQQKDSIPSIQIGFMTYIVEPLFREWARFTGNSTLSENMLSHLAHNKAQWKSLLSNQHRRRGSGQDLAGPAPETLEQTEGATP.

The 324-residue stretch at 97–420 (LDEDYLGQAR…AQWKSLLSNQ (324 aa)) folds into the PDEase domain. H173 acts as the Proton donor in catalysis. The a divalent metal cation site is built by H177, H213, D214, and D323. The interval 422 to 446 (RRRGSGQDLAGPAPETLEQTEGATP) is disordered. Position 426 is a phosphoserine (S426). At T445 the chain carries Phosphothreonine.

It belongs to the cyclic nucleotide phosphodiesterase family. PDE7 subfamily. A divalent metal cation is required as a cofactor. In terms of tissue distribution, highly expressed in brain.

The catalysed reaction is 3',5'-cyclic AMP + H2O = AMP + H(+). The protein operates within purine metabolism; 3',5'-cyclic AMP degradation; AMP from 3',5'-cyclic AMP: step 1/1. With respect to regulation, inhibited by dipyridamole, IBMX and SCH 51866. Insensitive to zaprinast, rolipram, and milrinone. Its function is as follows. Hydrolyzes the second messenger cAMP, which is a key regulator of many important physiological processes. May be involved in the control of cAMP-mediated neural activity and cAMP metabolism in the brain. The chain is 3',5'-cyclic-AMP phosphodiesterase 7B from Mus musculus (Mouse).